A 144-amino-acid chain; its full sequence is Large ribosomal subunit protein uL15 (144 aa).

The interval 1 to 53 (MRLNTLSPAEGSKHASKRLGRGIGSGLGKTGGRGHKGQKSRSGGGVRRGFEGG) is disordered. Residues 21-31 (RGIGSGLGKTG) show a composition bias toward gly residues.

This sequence belongs to the universal ribosomal protein uL15 family. Part of the 50S ribosomal subunit.

Functionally, binds to the 23S rRNA. The sequence is that of Large ribosomal subunit protein uL15 from Edwardsiella ictaluri (strain 93-146).